The primary structure comprises 216 residues: Ribose-5-phosphate isomerase A (216 aa).

Substrate-binding positions include 26–29 (TGST), 79–82 (DGAD), and 92–95 (KGGG). Glutamate 101 (proton acceptor) is an active-site residue. Substrate is bound at residue lysine 119.

Belongs to the ribose 5-phosphate isomerase family. Homodimer.

It catalyses the reaction aldehydo-D-ribose 5-phosphate = D-ribulose 5-phosphate. It participates in carbohydrate degradation; pentose phosphate pathway; D-ribose 5-phosphate from D-ribulose 5-phosphate (non-oxidative stage): step 1/1. Its function is as follows. Catalyzes the reversible conversion of ribose-5-phosphate to ribulose 5-phosphate. The polypeptide is Ribose-5-phosphate isomerase A (Legionella pneumophila subsp. pneumophila (strain Philadelphia 1 / ATCC 33152 / DSM 7513)).